A 162-amino-acid chain; its full sequence is Large ribosomal subunit protein uL15 (162 aa).

Over residues 1-18 (MKLNEIRDNEGATKDRMR) the composition is skewed to basic and acidic residues. The disordered stretch occupies residues 1 to 42 (MKLNEIRDNEGATKDRMRVGRGIGSGKGKTAGRGVKGQKART). Residues 21-35 (RGIGSGKGKTAGRGV) show a composition bias toward gly residues.

It belongs to the universal ribosomal protein uL15 family. Part of the 50S ribosomal subunit.

Its function is as follows. Binds to the 23S rRNA. This is Large ribosomal subunit protein uL15 from Methylobacterium sp. (strain 4-46).